A 55-amino-acid chain; its full sequence is uncharacterized protein (55 aa).

Its subcellular location is the plastid. This is an uncharacterized protein from Cuscuta reflexa (Southern Asian dodder).